A 316-amino-acid chain; its full sequence is uncharacterized protein (316 aa).

Thr-126 lines the substrate pocket. Tyr-149 serves as the catalytic Proton acceptor.

This sequence belongs to the NAD(P)-dependent epimerase/dehydratase family.

This is an uncharacterized protein from Bacillus subtilis (strain 168).